We begin with the raw amino-acid sequence, 156 residues long: MARRRQAEVRPLQPDLVYQDVLVSAMINRIMEDGKKNLASRIFYGACRLVQERTGQEPLKVFKQAYDNIKPRVEVRSRRVGGSTYQVPVEVSARRQQSLTLRWMMSAVDGRPERTAIERLAGEIMDAAQGRGGAIKKKDDVERMAEANRAYAHYRW.

This sequence belongs to the universal ribosomal protein uS7 family. As to quaternary structure, part of the 30S ribosomal subunit. Contacts proteins S9 and S11.

In terms of biological role, one of the primary rRNA binding proteins, it binds directly to 16S rRNA where it nucleates assembly of the head domain of the 30S subunit. Is located at the subunit interface close to the decoding center, probably blocks exit of the E-site tRNA. This Deinococcus deserti (strain DSM 17065 / CIP 109153 / LMG 22923 / VCD115) protein is Small ribosomal subunit protein uS7.